A 117-amino-acid chain; its full sequence is Immunoglobulin heavy variable 3-48 (117 aa).

Residues 1–19 form the signal peptide; the sequence is MELGLCWVFLVAILEGVQC. The segment at 20–44 is framework-1; it reads EVQLVESGGGLVQPGGSLRLSCAAS. The region spanning 20-117 is the Ig-like domain; that stretch reads EVQLVESGGG…EDTAVYYCAR (98 aa). Cysteine 41 and cysteine 115 are oxidised to a cystine. A complementarity-determining-1 region spans residues 45–52; sequence GFTFSSYE. A framework-2 region spans residues 53–69; sequence MNWVRQAPGKGLEWVSY. The interval 70–77 is complementarity-determining-2; sequence ISSSGSTI. The framework-3 stretch occupies residues 78 to 115; sequence YYADSVKGRFTISRDNAKNSLYLQMNSLRAEDTAVYYC. Positions 116 to 117 are complementarity-determining-3; the sequence is AR.

As to quaternary structure, immunoglobulins are composed of two identical heavy chains and two identical light chains; disulfide-linked. Post-translationally, the N-terminus is blocked.

It localises to the secreted. The protein localises to the cell membrane. In terms of biological role, v region of the variable domain of immunoglobulin heavy chains that participates in the antigen recognition. Immunoglobulins, also known as antibodies, are membrane-bound or secreted glycoproteins produced by B lymphocytes. In the recognition phase of humoral immunity, the membrane-bound immunoglobulins serve as receptors which, upon binding of a specific antigen, trigger the clonal expansion and differentiation of B lymphocytes into immunoglobulins-secreting plasma cells. Secreted immunoglobulins mediate the effector phase of humoral immunity, which results in the elimination of bound antigens. The antigen binding site is formed by the variable domain of one heavy chain, together with that of its associated light chain. Thus, each immunoglobulin has two antigen binding sites with remarkable affinity for a particular antigen. The variable domains are assembled by a process called V-(D)-J rearrangement and can then be subjected to somatic hypermutations which, after exposure to antigen and selection, allow affinity maturation for a particular antigen. This is Immunoglobulin heavy variable 3-48 from Homo sapiens (Human).